The primary structure comprises 325 residues: Helicase VP6-A (325 aa).

2 disordered regions span residues Met1–Arg126 and Gly175–Ile231. Basic and acidic residues-rich tracts occupy residues Val8–Gln18, Glu32–Glu54, Gly61–Ile79, and Pro92–Gly105. Lys106 serves as a coordination point for ATP. Residues Lys106–Gly122 are compositionally biased toward gly residues. The segment covering Gly175–Ala229 has biased composition (basic and acidic residues).

This sequence belongs to the orbivirus VP6 family. As to quaternary structure, homohexamer.

It is found in the virion. The enzyme catalyses ATP + H2O = ADP + phosphate + H(+). Functionally, ATP dependent RNA helicase essential for RNA packaging and viral transcription. Possesses ss- and dsRNA-binding capacity. The polypeptide is Helicase VP6-A (Segment-9) (Bluetongue virus 11 (isolate USA) (BTV 11)).